The following is a 269-amino-acid chain: Auxin-responsive protein IAA26 (269 aa).

Basic and acidic residues predominate over residues 25–40 (YQEDKNNTDQEKKLEL). Disordered stretches follow at residues 25-55 (YQEDKNNTDQEKKLELRLGPPGGDEEDHSAI) and 76-146 (CFNG…KQVE). The EAR-like (transcriptional repression) signature appears at 38 to 42 (LELRL). Composition is skewed to polar residues over residues 80–93 (NHFSPSNKTTSVPH) and 117–136 (LASTSSSKLGNESSHGGQIN). The segment covering 137 to 146 (KSDDGEKQVE) has biased composition (basic and acidic residues). Residues 151–250 (GMFVKINMDG…SVKRLRVIKS (100 aa)) form the PB1 domain.

Belongs to the Aux/IAA family. As to quaternary structure, homodimers and heterodimers. Interacts with phytochrome A. Interacts with TPL.

It localises to the nucleus. Aux/IAA proteins are short-lived transcriptional factors that function as repressors of early auxin response genes at low auxin concentrations. Repression is thought to result from the interaction with auxin response factors (ARFs), proteins that bind to the auxin-responsive promoter element (AuxRE). Formation of heterodimers with ARF proteins may alter their ability to modulate early auxin response genes expression. The chain is Auxin-responsive protein IAA26 (IAA26) from Arabidopsis thaliana (Mouse-ear cress).